We begin with the raw amino-acid sequence, 671 residues long: DNA ligase (671 aa).

NAD(+) contacts are provided by residues 32–36 (DAEYD), 81–82 (SL), and glutamate 113. Lysine 115 functions as the N6-AMP-lysine intermediate in the catalytic mechanism. The NAD(+) site is built by arginine 136, glutamate 173, lysine 290, and lysine 314. Residues cysteine 408, cysteine 411, cysteine 426, and cysteine 432 each contribute to the Zn(2+) site. Positions 593-671 (EIDSPFAGKT…EAEMMRLLGE (79 aa)) constitute a BRCT domain.

The protein belongs to the NAD-dependent DNA ligase family. LigA subfamily. The cofactor is Mg(2+). It depends on Mn(2+) as a cofactor.

The catalysed reaction is NAD(+) + (deoxyribonucleotide)n-3'-hydroxyl + 5'-phospho-(deoxyribonucleotide)m = (deoxyribonucleotide)n+m + AMP + beta-nicotinamide D-nucleotide.. Its function is as follows. DNA ligase that catalyzes the formation of phosphodiester linkages between 5'-phosphoryl and 3'-hydroxyl groups in double-stranded DNA using NAD as a coenzyme and as the energy source for the reaction. It is essential for DNA replication and repair of damaged DNA. The sequence is that of DNA ligase from Klebsiella pneumoniae (strain 342).